A 106-amino-acid polypeptide reads, in one-letter code: Large ribosomal subunit protein uL24 (106 aa).

The protein belongs to the universal ribosomal protein uL24 family. Part of the 50S ribosomal subunit.

Functionally, one of two assembly initiator proteins, it binds directly to the 5'-end of the 23S rRNA, where it nucleates assembly of the 50S subunit. Its function is as follows. One of the proteins that surrounds the polypeptide exit tunnel on the outside of the subunit. The sequence is that of Large ribosomal subunit protein uL24 from Acidiphilium cryptum (strain JF-5).